The primary structure comprises 182 residues: MVKALLVGSKVLIPNVDESRYIYSNGFYGKAIGISKPKGPKDIIRPLELSLIESVYLAKKGLIKVIDKNGEVLEYEKLYEYSSKIINKFDIMYRVYEDLREKGFIVRSGVKYGADFAVYTLGPGLEHAPYVVIAVDIDEEITPHELLSFGRVSHSTRKRLVLALVDRKSESVRYIMFKWVKM.

Catalysis depends on residues Tyr-119, His-127, and Lys-158.

The protein belongs to the tRNA-intron endonuclease family. Archaeal short subfamily. In terms of assembly, homotetramer; although the tetramer contains four active sites, only two participate in the cleavage. Therefore, it should be considered as a dimer of dimers.

It carries out the reaction pretRNA = a 3'-half-tRNA molecule with a 5'-OH end + a 5'-half-tRNA molecule with a 2',3'-cyclic phosphate end + an intron with a 2',3'-cyclic phosphate and a 5'-hydroxyl terminus.. Endonuclease that removes tRNA introns. Cleaves pre-tRNA at the 5'- and 3'-splice sites to release the intron. The products are an intron and two tRNA half-molecules bearing 2',3' cyclic phosphate and 5'-OH termini. Recognizes a pseudosymmetric substrate in which 2 bulged loops of 3 bases are separated by a stem of 4 bp. This is tRNA-splicing endonuclease from Saccharolobus islandicus (strain M.16.27) (Sulfolobus islandicus).